Consider the following 73-residue polypeptide: Bacterioferritin-associated ferredoxin (73 aa).

[2Fe-2S] cluster-binding residues include Cys4 and Cys6. Residues Arg26 and Arg29 each contribute to the phosphate site. [2Fe-2S] cluster is bound by residues Cys38 and Cys41. Lys46 contributes to the phosphate binding site.

It belongs to the Bfd family. In terms of assembly, monomer. Interacts with BfrB; up to 12 Bfd proteins can bind to the BfrB bacterioferritin complex (BFR). One Bfd protein binds to a BfrB dimer in the BFR, with the [2Fe-2S] cluster positioned about 22 Angstroms above the heme of BfrB. Does not interact with FtnA. [2Fe-2S] cluster is required as a cofactor. Requires phosphate as cofactor.

Its function is as follows. Required for mobilization of iron from the bacterioferritin (BFR) complex, composed of BfrB and FtnA in varying proportions; mobilization requires the [2Fe-2S] cluster of this protein. Reduction of the BfrB heme group occurs in the presence of Bfd, strongly suggesting that the BfrB-Bfd complex allows heme to mediate electron transfer from FPR to the Fe(3+) iron core in the BFR prior to its release as Fe(2+). The chain is Bacterioferritin-associated ferredoxin from Pseudomonas aeruginosa (strain ATCC 15692 / DSM 22644 / CIP 104116 / JCM 14847 / LMG 12228 / 1C / PRS 101 / PAO1).